Reading from the N-terminus, the 153-residue chain is SsrA-binding protein (153 aa).

The segment covering Ala-133–Gln-143 has biased composition (basic and acidic residues). The interval Ala-133–Tyr-153 is disordered. A compositionally biased stretch (low complexity) spans Met-144 to Tyr-153.

The protein belongs to the SmpB family.

It is found in the cytoplasm. Functionally, required for rescue of stalled ribosomes mediated by trans-translation. Binds to transfer-messenger RNA (tmRNA), required for stable association of tmRNA with ribosomes. tmRNA and SmpB together mimic tRNA shape, replacing the anticodon stem-loop with SmpB. tmRNA is encoded by the ssrA gene; the 2 termini fold to resemble tRNA(Ala) and it encodes a 'tag peptide', a short internal open reading frame. During trans-translation Ala-aminoacylated tmRNA acts like a tRNA, entering the A-site of stalled ribosomes, displacing the stalled mRNA. The ribosome then switches to translate the ORF on the tmRNA; the nascent peptide is terminated with the 'tag peptide' encoded by the tmRNA and targeted for degradation. The ribosome is freed to recommence translation, which seems to be the essential function of trans-translation. The polypeptide is SsrA-binding protein (Protochlamydia amoebophila (strain UWE25)).